The following is a 231-amino-acid chain: NADH-ubiquinone oxidoreductase chain 4 (231 aa).

Helical transmembrane passes span 1–21 (PIAG…YGII), 34–54 (MFLP…LTCL), 63–85 (IAYS…TPWG), 89–111 (AMAL…NTTY), 128–148 (ILPM…AVPP), and 156–176 (LLIM…LGLS).

This sequence belongs to the complex I subunit 4 family.

Its subcellular location is the mitochondrion membrane. The catalysed reaction is a ubiquinone + NADH + 5 H(+)(in) = a ubiquinol + NAD(+) + 4 H(+)(out). Functionally, core subunit of the mitochondrial membrane respiratory chain NADH dehydrogenase (Complex I) that is believed to belong to the minimal assembly required for catalysis. Complex I functions in the transfer of electrons from NADH to the respiratory chain. The immediate electron acceptor for the enzyme is believed to be ubiquinone. The protein is NADH-ubiquinone oxidoreductase chain 4 (MT-ND4) of Agkistrodon contortrix contortrix (Southern copperhead).